Here is a 2350-residue protein sequence, read N- to C-terminus: Probable JmjC domain-containing histone demethylation protein 2C (2350 aa).

2 disordered regions span residues 96–302 and 314–336; these read TRAQ…LQEC and PKDR…NDTH. Positions 98-127 are enriched in polar residues; it reads AQANSPRPAMNSQAAVPKQNTHQQQQQRSI. Phosphoserine is present on residues Ser135 and Ser138. Over residues 141-160 the composition is skewed to basic and acidic residues; sequence DEEKMKEDKYDCVSRGENPK. The segment covering 161–171 has biased composition (basic residues); sequence GKNKHVVTKRR. Positions 172-189 are enriched in basic and acidic residues; the sequence is KPEEAEKRLSMKRLRTDN. Residues 190-200 are compositionally biased toward low complexity; sequence ASDASESSDAE. Phosphoserine occurs at positions 191 and 194. The span at 257-280 shows a compositional bias: basic and acidic residues; the sequence is QEDKNHNEGEKPKSTDSHLQDKMT. A compositionally biased stretch (polar residues) spans 281–302; sequence LRSSEQATVADHNSNDSVLQEC. Phosphoserine is present on residues Ser294 and Ser320. Phosphothreonine is present on Thr324. 7 positions are modified to phosphoserine: Ser420, Ser436, Ser457, Ser458, Ser460, Ser471, and Ser762. Disordered stretches follow at residues 426–486, 747–766, 859–883, 1030–1083, and 1422–1508; these read SVTE…NSQA, SSAE…PPLT, RENY…DKDV, RKES…DQSL, and EKVS…VPRS. Low complexity-rich tracts occupy residues 863–874 and 1034–1045; these read SRVVPSSSSPKS and SYSSLSPPTLTP. Polar residues predominate over residues 1071-1083; that stretch reads SQSNFKNSSDQSL. A compositionally biased stretch (basic residues) spans 1454–1463; it reads KRQPKPTYKK. Residues 1464–1480 show a composition bias toward basic and acidic residues; sequence KQNDLQKRKGEVEEDSK. A C6-type zinc finger spans residues 1657 to 1682; the sequence is CDACEATLFNVHWVCRKCGFVACLDC. The segment covering 1776–1818 has biased composition (polar residues); it reads KTSVSLPESQQQNSPQKSQTNGNSSPGSASTDSRLTPPESQSP. Residues 1776–1874 form a disordered region; sequence KTSVSLPESQ…PASQSNEQGS (99 aa). A Phosphoserine modification is found at Ser1800. A compositionally biased stretch (basic and acidic residues) spans 1826–1849; it reads AEQKSREEKQENKEFTLEREIKED. Polar residues predominate over residues 1855-1874; the sequence is SDSPNGSTSPPASQSNEQGS. The LXXLL motif motif lies at 1876–1880; that stretch reads LRDLL. The disordered stretch occupies residues 1933–1962; that stretch reads PNKTSKINIKSEPNEEPKESSLPATDESNK. Lys1942 is covalently cross-linked (Glycyl lysine isopeptide (Lys-Gly) (interchain with G-Cter in SUMO2)). The JmjC domain maps to 2084–2308; that stretch reads MPTRYEDFLR…QSFHLTQELR (225 aa). Residues His2146, Glu2148, and His2276 each coordinate Fe cation.

It belongs to the JHDM2 histone demethylase family. It depends on Fe(2+) as a cofactor.

It is found in the nucleus. Functionally, probable histone demethylase that specifically demethylates 'Lys-9' of histone H3, thereby playing a central role in histone code. Demethylation of Lys residue generates formaldehyde and succinate. May be involved in hormone-dependent transcriptional activation, by participating in recruitment to androgen-receptor target genes. The protein is Probable JmjC domain-containing histone demethylation protein 2C (Jmjd1c) of Mus musculus (Mouse).